The primary structure comprises 445 residues: UPF0210 protein Sez_0396 (445 aa).

It belongs to the UPF0210 family. In terms of assembly, homodimer.

The protein is UPF0210 protein Sez_0396 of Streptococcus equi subsp. zooepidemicus (strain MGCS10565).